Reading from the N-terminus, the 97-residue chain is Large ribosomal subunit protein uL23 (97 aa).

This sequence belongs to the universal ribosomal protein uL23 family. In terms of assembly, part of the 50S ribosomal subunit. Contacts protein L29, and trigger factor when it is bound to the ribosome.

In terms of biological role, one of the early assembly proteins it binds 23S rRNA. One of the proteins that surrounds the polypeptide exit tunnel on the outside of the ribosome. Forms the main docking site for trigger factor binding to the ribosome. This Brucella abortus (strain S19) protein is Large ribosomal subunit protein uL23.